We begin with the raw amino-acid sequence, 225 residues long: uncharacterized protein (225 aa).

Positions 166–214 (LNSDVIKDKILAIIENVGEITYEELAEKINIPEEDLEKYLSELKESGDI) constitute a PCI domain.

This is an uncharacterized protein from Methanocaldococcus jannaschii (strain ATCC 43067 / DSM 2661 / JAL-1 / JCM 10045 / NBRC 100440) (Methanococcus jannaschii).